A 39-amino-acid polypeptide reads, in one-letter code: uncharacterized protein (39 aa).

This is an uncharacterized protein from Dictyostelium discoideum (Social amoeba).